Reading from the N-terminus, the 110-residue chain is Protein YcgL (110 aa).

Residues 14 to 98 (MFCVIYRSSK…PPEDLLKQHL (85 aa)) enclose the YcgL domain. Residues 88-110 (PPPEDLLKQHLSSVGQNTSHADR) are disordered. Over residues 97–110 (HLSSVGQNTSHADR) the composition is skewed to polar residues.

The polypeptide is Protein YcgL (Salmonella typhi).